The sequence spans 683 residues: U4/U6 small nuclear ribonucleoprotein Prp3 (683 aa).

A PWI domain is found at 1-87 (MALSKRELDE…HSKSSSDRSR (87 aa)). Residues 73 to 107 (GRSSRHSKSSSDRSRKRELKEVFGDDSEISKESSG) show a composition bias toward basic and acidic residues. A disordered region spans residues 73 to 135 (GRSSRHSKSS…IPGPPSESPG (63 aa)). A Glycyl lysine isopeptide (Lys-Gly) (interchain with G-Cter in SUMO2) cross-link involves residue Lys-139. The disordered stretch occupies residues 153–183 (IEERKKQLSFISPPTPQPKTPSSSQPERLPI). Ser-164 is subject to Phosphoserine. Thr-167 is modified (phosphothreonine). Residues Lys-244 and Lys-252 each participate in a glycyl lysine isopeptide (Lys-Gly) (interchain with G-Cter in SUMO2) cross-link. The segment at 416–550 (NLVEHPAQLN…VHISVYRVRN (135 aa)) is mediates interaction with SART3. The residue at position 619 (Ser-619) is a Phosphoserine.

In terms of assembly, component of the precatalytic spliceosome (spliceosome B complex). Component of the U4/U6-U5 tri-snRNP complex, a building block of the precatalytic spliceosome (spliceosome B complex). The U4/U6-U5 tri-snRNP complex is composed of the U4, U6 and U5 snRNAs and at least PRPF3, PRPF4, PRPF6, PRPF8, PRPF31, SNRNP200, TXNL4A, SNRNP40, SNRPB, SNRPD1, SNRPD2, SNRPD3, SNRPE, SNRPF, SNRPG, DDX23, CD2BP2, PPIH, SNU13, EFTUD2, SART1 and USP39, plus LSM2, LSM3, LSM4, LSM5, LSM6, LSM7 and LSM8. Interacts directly with PRPF4. Part of a heteromeric complex containing PPIH, PRPF3 and PRPF4 that is stable in the absence of RNA. Interacts with SART3; the interaction is direct and recruits the deubiquitinase USP4 to PRPF3. Interacts with PRPF19. Interacts ('Lys-63'-linked polyubiquitinated) with PRPF8 (via the MPN (JAB/Mov34) domain); may stabilize the U4/U6-U5 tri-snRNP complex. Interacts with ERCC6. Ubiquitinated. Undergoes 'Lys-63'-linked polyubiquitination by PRPF19 and deubiquitination by USP4. 'Lys-63'-linked ubiquitination increases the affinity for PRPF8 and may regulate the assembly of the U4/U6-U5 tri-snRNP complex. As to expression, highly expressed in retina, liver, kidney and blood. Detected at lower levels in heart and brain.

It is found in the nucleus. The protein resides in the nucleus speckle. In terms of biological role, plays a role in pre-mRNA splicing as component of the U4/U6-U5 tri-snRNP complex that is involved in spliceosome assembly, and as component of the precatalytic spliceosome (spliceosome B complex). In Homo sapiens (Human), this protein is U4/U6 small nuclear ribonucleoprotein Prp3 (PRPF3).